Here is a 271-residue protein sequence, read N- to C-terminus: MATH domain and coiled-coil domain-containing protein At3g27040 (271 aa).

The region spanning 7-133 is the MATH domain; the sequence is DKKFTWVIKN…NGEVKIVAEV (127 aa). Positions 230–271 form a coiled coil; sequence KLDWLEKKLKETGKSRLQEIEEDLKDLKVKCADMDALLDFLR.

The chain is MATH domain and coiled-coil domain-containing protein At3g27040 from Arabidopsis thaliana (Mouse-ear cress).